The primary structure comprises 192 residues: Ion-translocating oxidoreductase complex subunit B (192 aa).

The interval 1–26 is hydrophobic; sequence MNAIWIAVAAVSLLGLAFGAILGYAS. A 4Fe-4S domain is found at 32–91; that stretch reads EDDPVVEKIDEILPQSQCGQCGYPGCRPYAEAISCNGEKINRCAPGGEAVMLKIAELLNV. Residues cysteine 49, cysteine 52, cysteine 57, cysteine 74, cysteine 117, cysteine 120, cysteine 123, cysteine 127, cysteine 147, cysteine 150, cysteine 153, and cysteine 157 each coordinate [4Fe-4S] cluster. 4Fe-4S ferredoxin-type domains are found at residues 108–137 and 138–167; these read MVAF…GATR and AMHT…LQPV.

It belongs to the 4Fe4S bacterial-type ferredoxin family. RnfB subfamily. In terms of assembly, the complex is composed of six subunits: RsxA, RsxB, RsxC, RsxD, RsxE and RsxG. The cofactor is [4Fe-4S] cluster.

It localises to the cell inner membrane. Part of a membrane-bound complex that couples electron transfer with translocation of ions across the membrane. Required to maintain the reduced state of SoxR. This Escherichia coli O17:K52:H18 (strain UMN026 / ExPEC) protein is Ion-translocating oxidoreductase complex subunit B.